The sequence spans 436 residues: UPF0597 protein YhaM (436 aa).

This sequence belongs to the UPF0597 family.

In Escherichia coli (strain 55989 / EAEC), this protein is UPF0597 protein YhaM.